Here is a 509-residue protein sequence, read N- to C-terminus: DEAD-box ATP-dependent RNA helicase CshA (509 aa).

The Q motif signature appears at 2–30 (QNFKELGISDKTVQTLEAMGFKEPTPIQK). Positions 33–203 (IPYALEGDDI…QQFMKAPKII (171 aa)) constitute a Helicase ATP-binding domain. 46–53 (AQTGTGKT) provides a ligand contact to ATP. Positions 150–153 (DEAD) match the DEAD box motif. The Helicase C-terminal domain occupies 214–375 (QIDEYYTIVK…LRPPHRKEVL (162 aa)). 2 stretches are compositionally biased toward basic residues: residues 440 to 459 (ARKN…KRGN) and 467 to 482 (RRSK…KKNQ). Positions 440–509 (ARKNRSSKGG…KGRTFADHQK (70 aa)) are disordered. Over residues 483-492 (KKFDRRDKQQ) the composition is skewed to basic and acidic residues.

This sequence belongs to the DEAD box helicase family. CshA subfamily. Oligomerizes, may be a member of the RNA degradosome.

The protein localises to the cytoplasm. It catalyses the reaction ATP + H2O = ADP + phosphate + H(+). DEAD-box RNA helicase possibly involved in RNA degradation. Unwinds dsRNA in both 5'- and 3'-directions, has RNA-dependent ATPase activity. The chain is DEAD-box ATP-dependent RNA helicase CshA from Staphylococcus epidermidis (strain ATCC 35984 / DSM 28319 / BCRC 17069 / CCUG 31568 / BM 3577 / RP62A).